Reading from the N-terminus, the 46-residue chain is KSCCPNTTGRNIYNTCRFAGGSRERCAKLSGCKIISASTCPSDYPK.

3 disulfides stabilise this stretch: cysteine 3/cysteine 40, cysteine 4/cysteine 32, and cysteine 16/cysteine 26.

Monomer.

The protein resides in the secreted. In terms of biological role, thionins are small plant proteins which are toxic to animal cells. They seem to exert their toxic effect at the level of the cell membrane. Their precise function is not known. The protein is Viscotoxin-C1 of Viscum album (European mistletoe).